The primary structure comprises 622 residues: Calmodulin-binding protein 60 C (622 aa).

A compositionally biased stretch (basic and acidic residues) spans 1–19; it reads MQTRYMERTNSMREKRKLE. The interval 1–35 is disordered; sequence MQTRYMERTNSMREKRKLEEDDNQQQQQQPERKRP. The tract at residues 10 to 89 is calmodulin-binding; it reads NSMREKRKLE…RLSERSSPKR (80 aa). The DNA-binding stretch occupies residues 159–282; sequence EDDDGWSGEE…AFHKKLNKAG (124 aa).

Belongs to the plant ACBP60 protein family. In terms of assembly, interacts with calmodulin (CaM). As to expression, expressed in stems, flowers and root.

The protein resides in the nucleus. Transcription activator that binds DNA in a sequence-specific manner, likely 5'-GAAATTTTGG-3', to promote the expression of target genes. The polypeptide is Calmodulin-binding protein 60 C (Arabidopsis thaliana (Mouse-ear cress)).